Here is a 368-residue protein sequence, read N- to C-terminus: Cytochrome b-c1 complex subunit 2, mitochondrial (368 aa).

The N-terminal 16 residues, 1–16 (MLSAARLQFAQGSVRR), are a transit peptide targeting the mitochondrion. 2 positions are modified to phosphoserine: serine 141 and serine 168.

Belongs to the peptidase M16 family. UQCRC2/QCR2 subfamily. As to quaternary structure, component of the ubiquinol-cytochrome c oxidoreductase (cytochrome b-c1 complex, complex III, CIII), a multisubunit enzyme composed of 10 subunits. The complex is composed of 3 respiratory subunits cytochrome b (COB), cytochrome c1 (CYT1) and Rieske protein (RIP1), 2 core protein subunits COR1 and QCR2, and 5 low-molecular weight protein subunits QCR6, QCR7, QCR8, QCR9 and QCR10. The complex exists as an obligatory dimer and forms supercomplexes (SCs) in the inner mitochondrial membrane with a monomer or a dimer of cytochrome c oxidase (complex IV, CIV), resulting in 2 different assemblies (supercomplexes III(2)IV and III(2)IV(2)).

The protein resides in the mitochondrion inner membrane. Its function is as follows. Component of the ubiquinol-cytochrome c oxidoreductase, a multisubunit transmembrane complex that is part of the mitochondrial electron transport chain which drives oxidative phosphorylation. The respiratory chain contains 3 multisubunit complexes succinate dehydrogenase (complex II, CII), ubiquinol-cytochrome c oxidoreductase (cytochrome b-c1 complex, complex III, CIII) and cytochrome c oxidase (complex IV, CIV), that cooperate to transfer electrons derived from NADH and succinate to molecular oxygen, creating an electrochemical gradient over the inner membrane that drives transmembrane transport and the ATP synthase. The cytochrome b-c1 complex catalyzes electron transfer from ubiquinol to cytochrome c, linking this redox reaction to translocation of protons across the mitochondrial inner membrane, with protons being carried across the membrane as hydrogens on the quinol. In the process called Q cycle, 2 protons are consumed from the matrix, 4 protons are released into the intermembrane space and 2 electrons are passed to cytochrome c. This Saccharomyces cerevisiae (strain ATCC 204508 / S288c) (Baker's yeast) protein is Cytochrome b-c1 complex subunit 2, mitochondrial (QCR2).